Consider the following 152-residue polypeptide: SsrA-binding protein (152 aa).

Residues 124-152 (KKLHDKRDTAAERDWQRDKARLMKGDRGD) form a disordered region. The span at 128 to 152 (DKRDTAAERDWQRDKARLMKGDRGD) shows a compositional bias: basic and acidic residues.

Belongs to the SmpB family.

It localises to the cytoplasm. Its function is as follows. Required for rescue of stalled ribosomes mediated by trans-translation. Binds to transfer-messenger RNA (tmRNA), required for stable association of tmRNA with ribosomes. tmRNA and SmpB together mimic tRNA shape, replacing the anticodon stem-loop with SmpB. tmRNA is encoded by the ssrA gene; the 2 termini fold to resemble tRNA(Ala) and it encodes a 'tag peptide', a short internal open reading frame. During trans-translation Ala-aminoacylated tmRNA acts like a tRNA, entering the A-site of stalled ribosomes, displacing the stalled mRNA. The ribosome then switches to translate the ORF on the tmRNA; the nascent peptide is terminated with the 'tag peptide' encoded by the tmRNA and targeted for degradation. The ribosome is freed to recommence translation, which seems to be the essential function of trans-translation. In Caulobacter vibrioides (strain ATCC 19089 / CIP 103742 / CB 15) (Caulobacter crescentus), this protein is SsrA-binding protein.